The sequence spans 564 residues: Pestheic acid cluster transcriptional regulator 3 (564 aa).

A DNA-binding region (zn(2)-C6 fungal-type) is located at residues 11–38; it reads CWTCRLRRKKCDEGKPECTTCQALSITC. Positions 71–123 are disordered; it reads RTSSRYRVPPGQKANPKLAPKVHAAASTPSTNTSHSTETTPPSDNGFYDTAES. Over residues 97–113 the composition is skewed to polar residues; sequence STPSTNTSHSTETTPPS.

It is found in the nucleus. In terms of biological role, transcription factor that, with ptaR1 and ptaR2, coregulates the expression of the gene cluster that mediates the biosynthesis of pestheic acid, a diphenyl ether which is a biosynthetic precursor of the unique chloropupukeananes. The polypeptide is Pestheic acid cluster transcriptional regulator 3 (Pestalotiopsis fici (strain W106-1 / CGMCC3.15140)).